We begin with the raw amino-acid sequence, 773 residues long: MYRALWLSPLRFIVSSSSSKLTPYVSRGRGLSGIDNGAGCSCSRSVTTMIGNEFIRCQDESKILQLQIVDALRSGERQGASALLFKLIQGNYSLSADDFHDILYYCARSPDPVFVMETYSVMCKKEISLDSRSLLFIVKSLCNGGHLDKASEFIHAVREDDRISPLLPIYNFFLGACARTRSVYHASKCLELMDQRRVGKNGITYVALLKLAVFQRNLSTVNDIWKHYVNHYNLDILSLRRFIWSFTRLGDLKSAYELLQHMVYLALRGEFFVKSNRGKLHSTRLYIPVPSKDETGSEKFAFGVTDRIVDCNSSSKVALPKGHNKILAIRVLRWSFNDVIHACGQSKNSELAEQLMLQLKVMQQQNLKPYDSTLATVAAYCSKALQVDLAEHLLDQISECSYSYPFNNLLAAYDSLDQPERAVRVLARMKELKLRPDMRTYELLFSLFGNVNAPYEEGNMLSQVDCCKRINAIEMDMMRNGFQHSPISRLNVLRALGAEGMVNEMIRHLQKAENLSAHSNMYLGTPTYNIVLHSLLEANETDMVINIFKRMKSCGCPADVATYNIMIDCCSLIHSYKSACALVSMMIRDGFSPKAVTFTALMKILLNDANFEEALNLLDQAALEEIHLDVLSYNTILRKAFEKGMIDVIEYIVEQMHREKVNPDPTTCHYVFSCYVEKGYHATAIEALNVLSLRMLNEEDKESLQDKKIELEENFVMSEDPEAETKIIELFRKSEEHLAAALLNLRWCAMLGGRIIWSEDQSPWARALSNKYG.

11 PPR repeats span residues aspartate 130–proline 165, leucine 166–lysine 200, asparagine 201–histidine 231, aspartate 235–glycine 269, leucine 332–proline 369, tyrosine 370–cysteine 400, tyrosine 402–proline 436, glycine 524–alanine 558, aspartate 559–proline 593, lysine 594–leucine 628, and aspartate 629–proline 663.

The protein belongs to the PPR family. P subfamily.

The protein is Pentatricopeptide repeat-containing protein At1g76280 of Arabidopsis thaliana (Mouse-ear cress).